The primary structure comprises 455 residues: L-serine dehydratase (455 aa).

It belongs to the iron-sulfur dependent L-serine dehydratase family. It depends on [4Fe-4S] cluster as a cofactor.

The catalysed reaction is L-serine = pyruvate + NH4(+). It participates in carbohydrate biosynthesis; gluconeogenesis. This chain is L-serine dehydratase (sdaA), found in Helicobacter pylori (strain ATCC 700392 / 26695) (Campylobacter pylori).